We begin with the raw amino-acid sequence, 368 residues long: uncharacterized protein (368 aa).

Transmembrane regions (helical) follow at residues 22 to 42, 74 to 94, 104 to 124, 144 to 164, and 168 to 188; these read VAGI…FTLI, FVKP…LLVL, FLKT…LNLF, VGDF…GASL, and WGVN…AVSL.

Belongs to the MscS (TC 1.A.23) family.

It is found in the cell membrane. This is an uncharacterized protein from Aquifex aeolicus (strain VF5).